A 307-amino-acid polypeptide reads, in one-letter code: Taste receptor type 2 member 10 (307 aa).

Residues 1-6 are Extracellular-facing; the sequence is MLRVVE. Residues 7–27 form a helical membrane-spanning segment; the sequence is GIFIFVVVSESVFGVLGNGFI. Over 28–42 the chain is Cytoplasmic; it reads GLVNCIDCAKNKLST. A helical transmembrane segment spans residues 43 to 63; that stretch reads IGFILTGLAISRIFLIWIIIT. At 64–100 the chain is on the extracellular side; sequence DGFIQIFSPNIYASGNLIEYISYFWVIGNQSSMWFAT. An N-linked (GlcNAc...) asparagine glycan is attached at Asn92. Residues 101 to 121 form a helical membrane-spanning segment; that stretch reads SLSIFYFLKIANFSNYIFLWL. At 122 to 126 the chain is on the cytoplasmic side; it reads KSRTN. A helical membrane pass occupies residues 127–147; it reads MVLPFMIVFLLISSLLNFAYI. Residues 148–179 lie on the Extracellular side of the membrane; it reads AKILNDYKTKNDTVWDLNMYKSEYFIKQILLN. The N-linked (GlcNAc...) asparagine glycan is linked to Asn158. A helical transmembrane segment spans residues 180 to 200; it reads LGVIFFFTLSLITCIFLIISL. The Cytoplasmic segment spans residues 201 to 227; that stretch reads WRHNRQMQSNVTGLRDSNTEAHVKAMK. A helical membrane pass occupies residues 228–248; that stretch reads VLISFIILFILYFIGMAIEIS. Over 249–257 the chain is Extracellular; sequence CFTVRENKL. A helical membrane pass occupies residues 258–278; the sequence is LLMFGMTTTAIYPWGHSFILI. The Cytoplasmic portion of the chain corresponds to 279–307; it reads LGNSKLKQASLRVLQQLKCCEKRKNLRVT.

This sequence belongs to the G-protein coupled receptor T2R family. Expressed in subsets of taste receptor cells of the tongue and palate epithelium and exclusively in gustducin-positive cells.

It is found in the membrane. In terms of biological role, gustducin-coupled strychnine receptor implicated in the perception of bitter compounds in the oral cavity and the gastrointestinal tract. Signals through PLCB2 and the calcium-regulated cation channel TRPM5. In Homo sapiens (Human), this protein is Taste receptor type 2 member 10 (TAS2R10).